A 405-amino-acid polypeptide reads, in one-letter code: Molybdopterin molybdenumtransferase 2 (405 aa).

The protein belongs to the MoeA family. Mg(2+) is required as a cofactor.

It catalyses the reaction adenylyl-molybdopterin + molybdate = Mo-molybdopterin + AMP + H(+). The protein operates within cofactor biosynthesis; molybdopterin biosynthesis. Catalyzes the insertion of molybdate into adenylated molybdopterin with the concomitant release of AMP. The sequence is that of Molybdopterin molybdenumtransferase 2 (moaE2) from Mycobacterium tuberculosis (strain CDC 1551 / Oshkosh).